A 134-amino-acid polypeptide reads, in one-letter code: Phosphomevalonate dehydratase small subunit (134 aa).

Ser-62 serves as the catalytic Proton acceptor.

It belongs to the AcnX type II small subunit family. In terms of assembly, heterodimer composed of a large subunit (PMDh-L) and a small subunit (PMDh-S).

It carries out the reaction (R)-5-phosphomevalonate = (2E)-3-methyl-5-phosphooxypent-2-enoate + H2O. It functions in the pathway isoprenoid biosynthesis; isopentenyl diphosphate biosynthesis via mevalonate pathway. Its function is as follows. Component of a hydro-lyase that catalyzes the dehydration of mevalonate 5-phosphate (MVA5P) to form trans-anhydromevalonate 5-phosphate (tAHMP). Involved in the archaeal mevalonate (MVA) pathway, which provides fundamental precursors for isoprenoid biosynthesis, such as isopentenyl diphosphate (IPP) and dimethylallyl diphosphate (DMAPP). This is Phosphomevalonate dehydratase small subunit from Pyrococcus furiosus (strain ATCC 43587 / DSM 3638 / JCM 8422 / Vc1).